The primary structure comprises 116 residues: Protein Wnt-5b (116 aa).

S1 carries O-palmitoleoyl serine; by PORCN lipidation. N-linked (GlcNAc...) asparagine glycosylation is found at N69 and N83. A disulfide bond links C82 and C97.

This sequence belongs to the Wnt family. In terms of processing, palmitoleoylation is required for efficient binding to frizzled receptors. Depalmitoleoylation leads to Wnt signaling pathway inhibition.

It localises to the secreted. The protein resides in the extracellular space. Its subcellular location is the extracellular matrix. Its function is as follows. Ligand for members of the frizzled family of seven transmembrane receptors. Probable developmental protein. May be a signaling molecule which affects the development of discrete regions of tissues. Is likely to signal over only few cell diameters. This is Protein Wnt-5b (WNT-5B) from Alopias vulpinus (Common thresher shark).